Consider the following 100-residue polypeptide: MAKKSLIQREKKRQKLEQKYHSIRRSSKKEISKVPSLSDKWEIYGKLQSLPRNSAPTRLHRRCFLTGRPRANYRDFGLSGHILREMVHACLLPGATRSSW.

The interval 1–31 (MAKKSLIQREKKRQKLEQKYHSIRRSSKKEI) is disordered.

This sequence belongs to the universal ribosomal protein uS14 family. In terms of assembly, part of the 30S ribosomal subunit.

Its subcellular location is the plastid. The protein localises to the chloroplast. Binds 16S rRNA, required for the assembly of 30S particles. The sequence is that of Small ribosomal subunit protein uS14c from Atropa belladonna (Belladonna).